An 894-amino-acid polypeptide reads, in one-letter code: Myb-like protein K (894 aa).

A compositionally biased stretch (low complexity) spans 93–139; it reads LQQQQQSPVTNVATNTPPTLQHSISSPSPNNFNNNNNANNQFLSPNS. 4 disordered regions span residues 93-221, 299-353, 492-539, and 601-659; these read LQQQ…SASS, QVGN…QPIT, QQQQ…LEMI, and AATT…HWTS. Residues 140–149 are compositionally biased toward polar residues; that stretch reads PQVAKSSPSQ. Residues 150–221 are compositionally biased toward low complexity; sequence NNPSTPIANT…SQSLNSSASS (72 aa). Polar residues predominate over residues 300 to 309; it reads VGNPMQQSND. 2 stretches are compositionally biased toward low complexity: residues 310–353 and 492–527; these read MQPQ…QPIT and QQQQ…PQQM. Basic and acidic residues-rich tracts occupy residues 611 to 640 and 649 to 659; these read GKEE…SKKD and ASKEKTSHWTS. The HTH myb-type domain occupies 649–704; sequence ASKEKTSHWTSEEHNKFLEAVQQFGIKDYHAIAKFVQTRNHHQVRTHVNTYLKNQK. The segment at residues 677 to 700 is a DNA-binding region (H-T-H motif); it reads YHAIAKFVQTRNHHQVRTHVNTYL. The segment at 703–852 is disordered; sequence QKKAEAATSS…EYNSGFDSNS (150 aa). Low complexity-rich tracts occupy residues 710–742, 751–805, and 815–845; these read TSST…QPPI, QQQQ…QQPQ, and PPNN…NEYN.

Its subcellular location is the nucleus. The protein is Myb-like protein K (mybK) of Dictyostelium discoideum (Social amoeba).